The chain runs to 214 residues: Adenylate kinase (214 aa).

ATP is bound at residue 10-15 (GAGKGT). The interval 30–59 (STGDMFRAAIKEGTELGKQAKALMDEGKLV) is NMP. AMP contacts are provided by residues Thr-31, Arg-36, 57–59 (KLV), 85–88 (GFPR), and Gln-92. The LID stretch occupies residues 122-159 (GRRVHQPSGRTYHVVYNPPKVEGKDDVTGEDLIIRQDD). ATP is bound by residues Arg-123 and 132–133 (TY). Residues Arg-156 and Arg-167 each contribute to the AMP site. Lys-200 is an ATP binding site.

The protein belongs to the adenylate kinase family. In terms of assembly, monomer.

The protein resides in the cytoplasm. The enzyme catalyses AMP + ATP = 2 ADP. Its pathway is purine metabolism; AMP biosynthesis via salvage pathway; AMP from ADP: step 1/1. Catalyzes the reversible transfer of the terminal phosphate group between ATP and AMP. Plays an important role in cellular energy homeostasis and in adenine nucleotide metabolism. In Actinobacillus pleuropneumoniae serotype 5b (strain L20), this protein is Adenylate kinase.